The primary structure comprises 229 residues: Small ribosomal subunit protein uS3 (229 aa).

A KH type-2 domain is found at 17–85; sequence VKEWIKDEVR…NPQVSVDEVE (69 aa). The segment at 202 to 229 is disordered; that stretch reads LRGESGEDEGDKGDEQGGEAQEAEGAGA. Residues 219 to 229 are compositionally biased toward low complexity; it reads GEAQEAEGAGA.

This sequence belongs to the universal ribosomal protein uS3 family. In terms of assembly, part of the 30S ribosomal subunit.

In terms of biological role, binds the lower part of the 30S subunit head. This chain is Small ribosomal subunit protein uS3, found in Archaeoglobus fulgidus (strain ATCC 49558 / DSM 4304 / JCM 9628 / NBRC 100126 / VC-16).